The following is a 227-amino-acid chain: Enolase-phosphatase E1 (227 aa).

It belongs to the HAD-like hydrolase superfamily. MasA/MtnC family. As to quaternary structure, monomer. The cofactor is Mg(2+).

It catalyses the reaction 5-methylsulfanyl-2,3-dioxopentyl phosphate + H2O = 1,2-dihydroxy-5-(methylsulfanyl)pent-1-en-3-one + phosphate. Its pathway is amino-acid biosynthesis; L-methionine biosynthesis via salvage pathway; L-methionine from S-methyl-5-thio-alpha-D-ribose 1-phosphate: step 3/6. It functions in the pathway amino-acid biosynthesis; L-methionine biosynthesis via salvage pathway; L-methionine from S-methyl-5-thio-alpha-D-ribose 1-phosphate: step 4/6. Functionally, bifunctional enzyme that catalyzes the enolization of 2,3-diketo-5-methylthiopentyl-1-phosphate (DK-MTP-1-P) into the intermediate 2-hydroxy-3-keto-5-methylthiopentenyl-1-phosphate (HK-MTPenyl-1-P), which is then dephosphorylated to form the acireductone 1,2-dihydroxy-3-keto-5-methylthiopentene (DHK-MTPene). This chain is Enolase-phosphatase E1, found in Pseudomonas fluorescens (strain Pf0-1).